The following is a 360-amino-acid chain: Holliday junction branch migration complex subunit RuvB (360 aa).

The segment at Met1–Gln23 is disordered. The tract at residues Pro12–Tyr204 is large ATPase domain (RuvB-L). ATP-binding positions include Leu43, Arg44, Gly85, Lys88, Thr89, Thr90, Glu151–Tyr153, Arg194, Tyr204, and Arg241. Position 89 (Thr89) interacts with Mg(2+). The interval Thr205–Glu275 is small ATPAse domain (RuvB-S). Residues Gln278–Phe360 form a head domain (RuvB-H) region. Arg333 and Arg338 together coordinate DNA.

The protein belongs to the RuvB family. In terms of assembly, homohexamer. Forms an RuvA(8)-RuvB(12)-Holliday junction (HJ) complex. HJ DNA is sandwiched between 2 RuvA tetramers; dsDNA enters through RuvA and exits via RuvB. An RuvB hexamer assembles on each DNA strand where it exits the tetramer. Each RuvB hexamer is contacted by two RuvA subunits (via domain III) on 2 adjacent RuvB subunits; this complex drives branch migration. In the full resolvosome a probable DNA-RuvA(4)-RuvB(12)-RuvC(2) complex forms which resolves the HJ.

Its subcellular location is the cytoplasm. The enzyme catalyses ATP + H2O = ADP + phosphate + H(+). In terms of biological role, the RuvA-RuvB-RuvC complex processes Holliday junction (HJ) DNA during genetic recombination and DNA repair, while the RuvA-RuvB complex plays an important role in the rescue of blocked DNA replication forks via replication fork reversal (RFR). RuvA specifically binds to HJ cruciform DNA, conferring on it an open structure. The RuvB hexamer acts as an ATP-dependent pump, pulling dsDNA into and through the RuvAB complex. RuvB forms 2 homohexamers on either side of HJ DNA bound by 1 or 2 RuvA tetramers; 4 subunits per hexamer contact DNA at a time. Coordinated motions by a converter formed by DNA-disengaged RuvB subunits stimulates ATP hydrolysis and nucleotide exchange. Immobilization of the converter enables RuvB to convert the ATP-contained energy into a lever motion, pulling 2 nucleotides of DNA out of the RuvA tetramer per ATP hydrolyzed, thus driving DNA branch migration. The RuvB motors rotate together with the DNA substrate, which together with the progressing nucleotide cycle form the mechanistic basis for DNA recombination by continuous HJ branch migration. Branch migration allows RuvC to scan DNA until it finds its consensus sequence, where it cleaves and resolves cruciform DNA. This Koribacter versatilis (strain Ellin345) protein is Holliday junction branch migration complex subunit RuvB.